A 392-amino-acid polypeptide reads, in one-letter code: Putative RNA-binding protein Luc7-like 2 (392 aa).

Ser-18 is modified (phosphoserine). Residues 102–177 (EVSKKRLAET…EAEEVYRNSM (76 aa)) adopt a coiled-coil conformation. A compositionally biased stretch (basic and acidic residues) spans 235–257 (KQEKRNQERLKRREEREREEREK). The disordered stretch occupies residues 235-392 (KQEKRNQERL…SSEEREAGEI (158 aa)). Residues 258–321 (LRRSRSHSKN…RSRSHQRSRH (64 aa)) are compositionally biased toward basic residues. 5-hydroxylysine; by JMJD6 occurs at positions 266 and 269. Composition is skewed to basic and acidic residues over residues 337 to 364 (KERF…DRDR) and 377 to 392 (RSED…AGEI).

The protein belongs to the Luc7 family. As to quaternary structure, interacts with SCNM1. All isoforms are expressed in brain, kidney, heart, thymus, stomach, skeletal muscle, testis and spinal cord.

Its subcellular location is the nucleus speckle. The protein localises to the nucleus. It localises to the nucleoplasm. In terms of biological role, may bind to RNA via its Arg/Ser-rich domain. The sequence is that of Putative RNA-binding protein Luc7-like 2 (Luc7l2) from Mus musculus (Mouse).